Here is a 66-residue protein sequence, read N- to C-terminus: MKTKAVLMLMLLVLVAATLVQGEPEPSYVGDCGSNGGSCVSSYCPYGNRLNYFCPLGRTCCRRSYG.

A signal peptide spans 1–22; sequence MKTKAVLMLMLLVLVAATLVQG. Residues 23 to 26 constitute a propeptide that is removed on maturation; sequence EPEP. Intrachain disulfides connect C32/C54, C39/C61, and C44/C60. At Y65 the chain carries Tyrosine amide.

In terms of assembly, forms dimers and higher-order oligomers. Contains 3 disulfide bonds.

In terms of biological role, antimicrobial peptide. Has antibacterial activity against Gram-positive bacteria S.aureus ATCC 29737 and B.subtilis ATCC 6633 as well as against Gram-negative bacteria E.coli ATCC 10536 and K.pneumoniae ATCC 10031. This Panulirus argus (Caribbean spiny lobster) protein is Panusin.